A 309-amino-acid chain; its full sequence is NADH-cytochrome b5 reductase 2 (309 aa).

The helical transmembrane segment at 3 to 23 threads the bilayer; that stretch reads ILTAPVLIGVSIVVITVLYLF. An FAD-binding FR-type domain is found at 48-160; that stretch reads SVKYPLPLIE…RGPNGLLVYN (113 aa). Residues 140 to 170 and 179 to 214 contribute to the FAD site; these read DNMK…IRPD and KFKH…VCSL.

Belongs to the flavoprotein pyridine nucleotide cytochrome reductase family. FAD serves as cofactor.

The protein resides in the membrane. The enzyme catalyses 2 Fe(III)-[cytochrome b5] + NADH = 2 Fe(II)-[cytochrome b5] + NAD(+) + H(+). Its function is as follows. NADH-cytochrome b5 reductases are involved in desaturation and elongation of fatty acids, cholesterol biosynthesis and drug metabolism. The polypeptide is NADH-cytochrome b5 reductase 2 (cyb5r2) (Danio rerio (Zebrafish)).